A 404-amino-acid polypeptide reads, in one-letter code: Multidrug resistance protein MdtG (404 aa).

11 helical membrane passes run 19–39 (LGCF…PLYV), 56–76 (LVFS…GGLA), 90–110 (LGMA…QFLI), 113–133 (ALLG…ATQV), 144–164 (TLST…GLLA), 171–191 (PVFF…FFFI), 222–242 (LFVT…ILTL), 254–274 (IAFI…LSAP), 288–308 (ILIV…FVQT), 317–337 (FLLG…LVYN), and 376–396 (AVFC…WNSL).

It belongs to the major facilitator superfamily. DHA1 family. MdtG (TC 2.A.1.2.20) subfamily.

Its subcellular location is the cell inner membrane. The protein is Multidrug resistance protein MdtG of Salmonella typhimurium (strain LT2 / SGSC1412 / ATCC 700720).